Reading from the N-terminus, the 579-residue chain is Type II restriction enzyme FokI (579 aa).

Active-site residues include aspartate 450, aspartate 467, and lysine 469.

Monomer, in which form it can cleave DNA. Homodimer when bound to DNA. Requires Mg(2+) as cofactor.

It catalyses the reaction Endonucleolytic cleavage of DNA to give specific double-stranded fragments with terminal 5'-phosphates.. In terms of biological role, an S subtype restriction enzyme that recognizes the asymmetric double-stranded sequence 5'-GGATG-3' and cleaves respectively 14 bases after G-1 (top strand) and 13 bases before C-1 (bottom strand). This chain is Type II restriction enzyme FokI, found in Planomicrobium okeanokoites (Planococcus okeanokoites).